The sequence spans 156 residues: ATP synthase subunit b (156 aa).

The chain crosses the membrane as a helical span at residues 11 to 31 (AIAFAVFVWFCMKYVWPPLLA).

Belongs to the ATPase B chain family. As to quaternary structure, F-type ATPases have 2 components, F(1) - the catalytic core - and F(0) - the membrane proton channel. F(1) has five subunits: alpha(3), beta(3), gamma(1), delta(1), epsilon(1). F(0) has three main subunits: a(1), b(2) and c(10-14). The alpha and beta chains form an alternating ring which encloses part of the gamma chain. F(1) is attached to F(0) by a central stalk formed by the gamma and epsilon chains, while a peripheral stalk is formed by the delta and b chains.

Its subcellular location is the cell inner membrane. Its function is as follows. F(1)F(0) ATP synthase produces ATP from ADP in the presence of a proton or sodium gradient. F-type ATPases consist of two structural domains, F(1) containing the extramembraneous catalytic core and F(0) containing the membrane proton channel, linked together by a central stalk and a peripheral stalk. During catalysis, ATP synthesis in the catalytic domain of F(1) is coupled via a rotary mechanism of the central stalk subunits to proton translocation. In terms of biological role, component of the F(0) channel, it forms part of the peripheral stalk, linking F(1) to F(0). The chain is ATP synthase subunit b from Psychromonas ingrahamii (strain DSM 17664 / CCUG 51855 / 37).